The chain runs to 213 residues: Leucine-rich repeat protein 1 (213 aa).

A signal peptide spans 1–21 (MGAGALGVVAMVAAAVVVAMA). LRR repeat units lie at residues 90 to 113 (DHLQYLELYKNNIQGTIPSELGNL), 115 to 137 (NLISLDLYKNNISGTIPPTLGKL), 138 to 161 (TSLVFLRLNGNRLTGPIPRELAGI), and 163 to 186 (SLKVVDVSSNDLCGTIPTSGPFEH).

As to quaternary structure, interacts with HIR1.

It is found in the early endosome membrane. The protein localises to the late endosome membrane. The protein resides in the cell membrane. In terms of biological role, involved in plant defense response. This is Leucine-rich repeat protein 1 from Oryza sativa subsp. indica (Rice).